The following is a 327-amino-acid chain: Glycerol-3-phosphate dehydrogenase [NAD(P)+] (327 aa).

The NADPH site is built by S10, F11, R31, and K108. Positions 108, 136, and 138 each coordinate sn-glycerol 3-phosphate. A140 contacts NADPH. 5 residues coordinate sn-glycerol 3-phosphate: K191, D246, S256, R257, and N258. The active-site Proton acceptor is the K191. An NADPH-binding site is contributed by R257. The NADPH site is built by L281 and E283.

It belongs to the NAD-dependent glycerol-3-phosphate dehydrogenase family.

It localises to the cytoplasm. The catalysed reaction is sn-glycerol 3-phosphate + NAD(+) = dihydroxyacetone phosphate + NADH + H(+). It catalyses the reaction sn-glycerol 3-phosphate + NADP(+) = dihydroxyacetone phosphate + NADPH + H(+). It participates in membrane lipid metabolism; glycerophospholipid metabolism. In terms of biological role, catalyzes the reduction of the glycolytic intermediate dihydroxyacetone phosphate (DHAP) to sn-glycerol 3-phosphate (G3P), the key precursor for phospholipid synthesis. The protein is Glycerol-3-phosphate dehydrogenase [NAD(P)+] of Ehrlichia ruminantium (strain Gardel).